The sequence spans 136 residues: Classical arabinogalactan protein 26 (136 aa).

Residues 1–21 (MSVSLFTAFTVLSLCLHTSTS) form the signal peptide. Residues 38–95 (APSSFSASTPAMSPDTSPLFPTPGSSEMSPSPSESSIMPTIPSSLSPPNPDAVTPDPL) form a disordered region. The span at 40–53 (SSFSASTPAMSPDT) shows a compositional bias: polar residues. Over residues 59 to 81 (TPGSSEMSPSPSESSIMPTIPSS) the composition is skewed to low complexity. The GPI-anchor amidated serine moiety is linked to residue Ser-108. A propeptide spans 109-136 (SSVCLVSSQLSSLLLVLLMLLLAFCSFF) (removed in mature form).

This sequence belongs to the classical AGP family. In terms of processing, O-glycosylated on the hydroxyproline residues.

The protein localises to the cell membrane. In terms of biological role, proteoglycan that seems to be implicated in diverse developmental roles such as differentiation, cell-cell recognition, embryogenesis and programmed cell death. In Arabidopsis thaliana (Mouse-ear cress), this protein is Classical arabinogalactan protein 26 (AGP26).